The primary structure comprises 91 residues: Sec-independent protein translocase protein TatA (91 aa).

The chain crosses the membrane as a helical span at residues 1–21 (MGAMSPWHWAIVALVVIILFG). A disordered region spans residues 44-91 (KEMQNDNSTPAPTAQQSAPAELPVADTTTAPVTPPAPVQPQHTEPKSA). Residues 51–74 (STPAPTAQQSAPAELPVADTTTAP) show a composition bias toward low complexity.

The protein belongs to the TatA/E family. In terms of assembly, the Tat system comprises two distinct complexes: a TatABC complex, containing multiple copies of TatA, TatB and TatC subunits, and a separate TatA complex, containing only TatA subunits. Substrates initially bind to the TatABC complex, which probably triggers association of the separate TatA complex to form the active translocon.

It is found in the cell membrane. In terms of biological role, part of the twin-arginine translocation (Tat) system that transports large folded proteins containing a characteristic twin-arginine motif in their signal peptide across membranes. TatA could form the protein-conducting channel of the Tat system. The polypeptide is Sec-independent protein translocase protein TatA (Rhodococcus jostii (strain RHA1)).